A 262-amino-acid chain; its full sequence is Putative hydro-lyase BLi00500/BL02808 (262 aa).

Belongs to the D-glutamate cyclase family.

This chain is Putative hydro-lyase BLi00500/BL02808, found in Bacillus licheniformis (strain ATCC 14580 / DSM 13 / JCM 2505 / CCUG 7422 / NBRC 12200 / NCIMB 9375 / NCTC 10341 / NRRL NRS-1264 / Gibson 46).